A 527-amino-acid polypeptide reads, in one-letter code: Type-2 serine--tRNA ligase (527 aa).

Alanine 317 contacts L-serine. Cysteine 319 provides a ligand contact to Zn(2+). Arginine 349 is a binding site for L-serine. ATP is bound by residues 349–351 (RWE) and 360–361 (RV). Residue 366 to 368 (RIE) participates in L-serine binding. Glutamate 368 and cysteine 478 together coordinate Zn(2+). Arginine 485 is an ATP binding site.

It belongs to the class-II aminoacyl-tRNA synthetase family. Type-2 seryl-tRNA synthetase subfamily. Homodimer. Zn(2+) serves as cofactor.

It is found in the cytoplasm. The catalysed reaction is tRNA(Ser) + L-serine + ATP = L-seryl-tRNA(Ser) + AMP + diphosphate + H(+). It catalyses the reaction tRNA(Sec) + L-serine + ATP = L-seryl-tRNA(Sec) + AMP + diphosphate + H(+). It participates in aminoacyl-tRNA biosynthesis; selenocysteinyl-tRNA(Sec) biosynthesis; L-seryl-tRNA(Sec) from L-serine and tRNA(Sec): step 1/1. In terms of biological role, catalyzes the attachment of serine to tRNA(Ser). Is also able to aminoacylate tRNA(Sec) with serine, to form the misacylated tRNA L-seryl-tRNA(Sec), which will be further converted into selenocysteinyl-tRNA(Sec). This is Type-2 serine--tRNA ligase from Methanopyrus kandleri (strain AV19 / DSM 6324 / JCM 9639 / NBRC 100938).